We begin with the raw amino-acid sequence, 107 residues long: Putative nucleosome assembly protein 1-like 6 (107 aa).

This sequence belongs to the nucleosome assembly protein (NAP) family.

The chain is Putative nucleosome assembly protein 1-like 6 from Homo sapiens (Human).